The following is a 121-amino-acid chain: Large ribosomal subunit protein bL12 (121 aa).

The protein belongs to the bacterial ribosomal protein bL12 family. In terms of assembly, homodimer. Part of the ribosomal stalk of the 50S ribosomal subunit. Forms a multimeric L10(L12)X complex, where L10 forms an elongated spine to which 2 to 4 L12 dimers bind in a sequential fashion. Binds GTP-bound translation factors.

In terms of biological role, forms part of the ribosomal stalk which helps the ribosome interact with GTP-bound translation factors. Is thus essential for accurate translation. This chain is Large ribosomal subunit protein bL12, found in Clostridium beijerinckii (strain ATCC 51743 / NCIMB 8052) (Clostridium acetobutylicum).